The following is a 481-amino-acid chain: Pyruvate kinase (481 aa).

Arg36 provides a ligand contact to substrate. Positions 38, 40, and 70 each coordinate K(+). An ATP-binding site is contributed by 38–41 (NFSH). ATP is bound by residues Arg77 and Lys160. Glu225 serves as a coordination point for Mg(2+). Substrate contacts are provided by Gly251, Asp252, and Thr284. Asp252 serves as a coordination point for Mg(2+).

It belongs to the pyruvate kinase family. As to quaternary structure, homotetramer. Requires Mg(2+) as cofactor. K(+) serves as cofactor.

The enzyme catalyses pyruvate + ATP = phosphoenolpyruvate + ADP + H(+). The protein operates within carbohydrate degradation; glycolysis; pyruvate from D-glyceraldehyde 3-phosphate: step 5/5. With respect to regulation, allosterically activated by AMP and by several sugar phosphates. Belongs to type II PK. This chain is Pyruvate kinase (pykA), found in Buchnera aphidicola subsp. Schizaphis graminum (strain Sg).